Here is a 252-residue protein sequence, read N- to C-terminus: tRNA pseudouridine synthase A (252 aa).

Asp-51 (nucleophile) is an active-site residue. Substrate is bound at residue Tyr-105.

The protein belongs to the tRNA pseudouridine synthase TruA family.

It catalyses the reaction uridine(38/39/40) in tRNA = pseudouridine(38/39/40) in tRNA. Its function is as follows. Formation of pseudouridine at positions 38, 39 and 40 in the anticodon stem and loop of transfer RNAs. The polypeptide is tRNA pseudouridine synthase A (Thermoplasma acidophilum (strain ATCC 25905 / DSM 1728 / JCM 9062 / NBRC 15155 / AMRC-C165)).